The sequence spans 116 residues: Iron-sulfur cluster insertion protein ErpA (116 aa).

Iron-sulfur cluster contacts are provided by Cys44, Cys108, and Cys110.

This sequence belongs to the HesB/IscA family. Homodimer. Requires iron-sulfur cluster as cofactor.

Required for insertion of 4Fe-4S clusters for at least IspG. In Shewanella sp. (strain ANA-3), this protein is Iron-sulfur cluster insertion protein ErpA.